A 156-amino-acid polypeptide reads, in one-letter code: Cell division protein SepF (156 aa).

The protein belongs to the SepF family. In terms of assembly, homodimer. Interacts with FtsZ.

Its subcellular location is the cytoplasm. Cell division protein that is part of the divisome complex and is recruited early to the Z-ring. Probably stimulates Z-ring formation, perhaps through the cross-linking of FtsZ protofilaments. Its function overlaps with FtsA. The sequence is that of Cell division protein SepF from Ruminiclostridium cellulolyticum (strain ATCC 35319 / DSM 5812 / JCM 6584 / H10) (Clostridium cellulolyticum).